The primary structure comprises 156 residues: Transcription factor E (156 aa).

An HTH TFE/IIEalpha-type domain is found at methionine 1 to glutamate 72.

The protein belongs to the TFE family. In terms of assembly, monomer. Interaction with RNA polymerase subunits RpoF and RpoE is necessary for Tfe stimulatory transcription activity. Able to interact with Tbp and RNA polymerase in the absence of DNA promoter. Interacts both with the preinitiation and elongation complexes.

Functionally, transcription factor that plays a role in the activation of archaeal genes transcribed by RNA polymerase. Facilitates transcription initiation by enhancing TATA-box recognition by TATA-box-binding protein (Tbp), and transcription factor B (Tfb) and RNA polymerase recruitment. Not absolutely required for transcription in vitro, but particularly important in cases where Tbp or Tfb function is not optimal. It dynamically alters the nucleic acid-binding properties of RNA polymerases by stabilizing the initiation complex and destabilizing elongation complexes. Seems to translocate with the RNA polymerase following initiation and acts by binding to the non template strand of the transcription bubble in elongation complexes. This is Transcription factor E from Staphylothermus marinus (strain ATCC 43588 / DSM 3639 / JCM 9404 / F1).